A 718-amino-acid chain; its full sequence is Protein SQS1 (718 aa).

Disordered regions lie at residues 247–301 (TTAI…DEDD), 341–404 (FALN…GLAR), and 430–452 (KRGA…SANA). Residues 265–282 (TSLRDDPEVIPVAREKRA) are compositionally biased toward basic and acidic residues. A compositionally biased stretch (basic residues) spans 283–293 (GRQRSRSKASK). The segment covering 375-400 (DADEDNGDENDEADEDDDMDADMDDE) has biased composition (acidic residues). A compositionally biased stretch (polar residues) spans 442–452 (TPSSFAKSANA). The region spanning 537–599 (GLRLEDFKTE…TRRPVLYRSK (63 aa)) is the R3H domain. One can recognise a G-patch domain in the interval 673–718 (QENKGRAMLEKMGWSKGMALGALENKGILEPVAQVVKKSKAGLGRT).

This sequence belongs to the SQS1 family.

It localises to the cytoplasm. The protein resides in the nucleus. In terms of biological role, may be involved in splicing. In Podospora anserina (Pleurage anserina), this protein is Protein SQS1 (SQS1).